The chain runs to 126 residues: Putative regulator AldR (126 aa).

The protein belongs to the RutC family.

Functionally, implicated in the regulation of isoleucine biosynthesis. The protein is Putative regulator AldR (aldR) of Lactococcus lactis subsp. lactis (strain IL1403) (Streptococcus lactis).